A 102-amino-acid chain; its full sequence is Small ribosomal subunit protein uS10 (102 aa).

This sequence belongs to the universal ribosomal protein uS10 family. In terms of assembly, part of the 30S ribosomal subunit.

Involved in the binding of tRNA to the ribosomes. The chain is Small ribosomal subunit protein uS10 from Paramagnetospirillum magneticum (strain ATCC 700264 / AMB-1) (Magnetospirillum magneticum).